A 348-amino-acid chain; its full sequence is Mediator of RNA polymerase II transcription subunit 18 (348 aa).

Positions 152-218 (MDVDLEHKDK…KNDEVKHSEV (67 aa)) are enriched in basic and acidic residues. The segment at 152-227 (MDVDLEHKDK…VNLEDGAETG (76 aa)) is disordered. Positions 167 to 223 (DTKEKEEDKKEEDKKEEDKKEEDKKEEDKKEEDKKEEEKVEKKNDEVKHSEVNLEDG) form a coiled coil.

This sequence belongs to the Mediator complex subunit 18 family. As to quaternary structure, component of the Mediator complex.

Its subcellular location is the nucleus. In terms of biological role, component of the Mediator complex, a coactivator involved in the regulated transcription of nearly all RNA polymerase II-dependent genes. Mediator functions as a bridge to convey information from gene-specific regulatory proteins to the basal RNA polymerase II transcription machinery. Mediator is recruited to promoters by direct interactions with regulatory proteins and serves as a scaffold for the assembly of a functional preinitiation complex with RNA polymerase II and the general transcription factors. The protein is Mediator of RNA polymerase II transcription subunit 18 (SRB5) of Scheffersomyces stipitis (strain ATCC 58785 / CBS 6054 / NBRC 10063 / NRRL Y-11545) (Yeast).